Consider the following 325-residue polypeptide: MKKWQLVGTTVLGASVLLGACGGNDGGSGDGKDLKGSAKGEGSSTVAPIVEKLNEKWAKDHKDAKISSGQAGTGAGFQKFIAGETDFSDASRPIKDEEKKKLEDKGIKYHEFKIAQDGVTIAVNKDNDFVKELTKSQLKDIYSGKAKTWKDVNSSWPDKKINAVSPNSSHGTYDFFEEEVMDKQDIKAEKNADTNAIVSSVTKNKEGIGYFGYNFYEQNKDKLKEVKIKDDNGKVTEPTKKTIQNGSYALSRPLFIYAKDKSLKDNKVMSEFMKFVLEDEGKAAEDAGYVASPKKTYKSQLDDLKDFLDKHQKSDKKDDKKSEDK.

Positions 1-20 (MKKWQLVGTTVLGASVLLGA) are cleaved as a signal peptide. Cysteine 21 carries N-palmitoyl cysteine lipidation. Cysteine 21 is lipidated: S-diacylglycerol cysteine. Residues 23 to 46 (GNDGGSGDGKDLKGSAKGEGSSTV) form a disordered region.

The protein belongs to the PstS family. In terms of assembly, the complex is composed of two ATP-binding proteins (PstB), two transmembrane proteins (PstC and PstA) and a solute-binding protein (PstS).

It localises to the cell membrane. In terms of biological role, part of the ABC transporter complex PstSACB involved in phosphate import. This Staphylococcus epidermidis (strain ATCC 12228 / FDA PCI 1200) protein is Phosphate-binding protein PstS (pstS).